A 342-amino-acid chain; its full sequence is Dihydroorotate dehydrogenase (quinone) (342 aa).

FMN-binding positions include 61-65 and Thr85; that span reads AGLDK. Lys65 contributes to the substrate binding site. 110–114 lines the substrate pocket; it reads NRMGF. FMN contacts are provided by Asn138 and Asn171. Asn171 contributes to the substrate binding site. Ser174 functions as the Nucleophile in the catalytic mechanism. Asn176 provides a ligand contact to substrate. Residues Lys216 and Thr244 each coordinate FMN. Substrate is bound at residue 245–246; sequence NT. Residues Gly267, Gly296, and 317 to 318 each bind FMN; that span reads YS.

It belongs to the dihydroorotate dehydrogenase family. Type 2 subfamily. Monomer. It depends on FMN as a cofactor.

It is found in the cell membrane. The enzyme catalyses (S)-dihydroorotate + a quinone = orotate + a quinol. The protein operates within pyrimidine metabolism; UMP biosynthesis via de novo pathway; orotate from (S)-dihydroorotate (quinone route): step 1/1. Catalyzes the conversion of dihydroorotate to orotate with quinone as electron acceptor. This is Dihydroorotate dehydrogenase (quinone) from Pseudomonas aeruginosa (strain LESB58).